The sequence spans 437 residues: Cobyrinate a,c-diamide synthase (437 aa).

One can recognise a GATase cobBQ-type domain in the interval 243–433 (IAAIAYDSAF…SHFHFSSARG (191 aa)). Cys-324 serves as the catalytic Nucleophile.

The protein belongs to the CobB/CbiA family. Mg(2+) is required as a cofactor.

The catalysed reaction is cob(II)yrinate + 2 L-glutamine + 2 ATP + 2 H2O = cob(II)yrinate a,c diamide + 2 L-glutamate + 2 ADP + 2 phosphate + 2 H(+). It participates in cofactor biosynthesis; adenosylcobalamin biosynthesis; cob(II)yrinate a,c-diamide from sirohydrochlorin (anaerobic route): step 10/10. In terms of biological role, catalyzes the ATP-dependent amidation of the two carboxylate groups at positions a and c of cobyrinate, using either L-glutamine or ammonia as the nitrogen source. This is Cobyrinate a,c-diamide synthase from Sulfurisphaera tokodaii (strain DSM 16993 / JCM 10545 / NBRC 100140 / 7) (Sulfolobus tokodaii).